Reading from the N-terminus, the 308-residue chain is HPr kinase/phosphorylase (308 aa).

Active-site residues include histidine 138 and lysine 159. ATP is bound at residue 153-160; sequence GESGLGKS. Serine 160 lines the Mg(2+) pocket. Catalysis depends on aspartate 177, which acts as the Proton acceptor; for phosphorylation activity. Proton donor; for dephosphorylation activity. An important for the catalytic mechanism of both phosphorylation and dephosphorylation region spans residues 201-210; it reads LEVRGLGLLD. Glutamate 202 is a binding site for Mg(2+). Residue arginine 243 is part of the active site. An important for the catalytic mechanism of dephosphorylation region spans residues 264–269; the sequence is QVAAGR.

It belongs to the HPrK/P family. Homohexamer. Mg(2+) serves as cofactor.

The enzyme catalyses [HPr protein]-L-serine + ATP = [HPr protein]-O-phospho-L-serine + ADP + H(+). It catalyses the reaction [HPr protein]-O-phospho-L-serine + phosphate + H(+) = [HPr protein]-L-serine + diphosphate. Functionally, catalyzes the ATP- as well as the pyrophosphate-dependent phosphorylation of a specific serine residue in HPr, a phosphocarrier protein of the phosphoenolpyruvate-dependent sugar phosphotransferase system (PTS). HprK/P also catalyzes the pyrophosphate-producing, inorganic phosphate-dependent dephosphorylation (phosphorolysis) of seryl-phosphorylated HPr (P-Ser-HPr). In Bordetella petrii (strain ATCC BAA-461 / DSM 12804 / CCUG 43448), this protein is HPr kinase/phosphorylase.